A 513-amino-acid chain; its full sequence is 2,3-bisphosphoglycerate-independent phosphoglycerate mutase (513 aa).

Mn(2+)-binding residues include Asp-13 and Ser-63. Residue Ser-63 is the Phosphoserine intermediate of the active site. Residues His-124, 154–155, Arg-186, Arg-192, 262–265, and Lys-335 contribute to the substrate site; these read RD and RADR. Positions 402, 406, 443, 444, and 462 each coordinate Mn(2+).

This sequence belongs to the BPG-independent phosphoglycerate mutase family. As to quaternary structure, monomer. The cofactor is Mn(2+).

It catalyses the reaction (2R)-2-phosphoglycerate = (2R)-3-phosphoglycerate. It participates in carbohydrate degradation; glycolysis; pyruvate from D-glyceraldehyde 3-phosphate: step 3/5. In terms of biological role, catalyzes the interconversion of 2-phosphoglycerate and 3-phosphoglycerate. The chain is 2,3-bisphosphoglycerate-independent phosphoglycerate mutase from Shewanella amazonensis (strain ATCC BAA-1098 / SB2B).